Reading from the N-terminus, the 453-residue chain is Histidine--tRNA ligase (453 aa).

The protein belongs to the class-II aminoacyl-tRNA synthetase family. In terms of assembly, homodimer.

The protein resides in the cytoplasm. It catalyses the reaction tRNA(His) + L-histidine + ATP = L-histidyl-tRNA(His) + AMP + diphosphate + H(+). The chain is Histidine--tRNA ligase from Cytophaga hutchinsonii (strain ATCC 33406 / DSM 1761 / CIP 103989 / NBRC 15051 / NCIMB 9469 / D465).